Here is a 723-residue protein sequence, read N- to C-terminus: Threonine--tRNA ligase 1, cytoplasmic (723 aa).

A compositionally biased stretch (polar residues) spans 1 to 10; it reads MSEEQASSPS. Positions 1-49 are disordered; it reads MSEEQASSPSAKMGDEEKPVGAGEEKQKEGSKKKNKEGSGDGGRAELNP. Positions 13 to 39 are enriched in basic and acidic residues; it reads MGDEEKPVGAGEEKQKEGSKKKNKEGS. A Phosphoserine modification is found at Ser39. The region spanning 79–143 is the TGS domain; that stretch reads DSKPIKVTLP…EEDCTLELLK (65 aa). An N6-acetyllysine modification is found at Lys243. Thr246 carries the post-translational modification Phosphothreonine. Tyr298 carries the phosphotyrosine modification. Thr453 carries the post-translational modification Phosphothreonine. Ser702 carries the post-translational modification Phosphoserine.

It belongs to the class-II aminoacyl-tRNA synthetase family. Homodimer. ISGylated.

Its subcellular location is the cytoplasm. It catalyses the reaction tRNA(Thr) + L-threonine + ATP = L-threonyl-tRNA(Thr) + AMP + diphosphate + H(+). Its function is as follows. Catalyzes the attachment of threonine to tRNA(Thr) in a two-step reaction: threonine is first activated by ATP to form Thr-AMP and then transferred to the acceptor end of tRNA(Thr). Also edits incorrectly charged tRNA(Thr) via its editing domain, at the post-transfer stage. The protein is Threonine--tRNA ligase 1, cytoplasmic (TARS1) of Bos taurus (Bovine).